We begin with the raw amino-acid sequence, 354 residues long: Adenine deaminase (354 aa).

Residues His20, His22, and His200 each contribute to the Zn(2+) site. Glu203 functions as the Proton donor in the catalytic mechanism. Asp281 contacts Zn(2+). Asp282 is a binding site for substrate.

It belongs to the metallo-dependent hydrolases superfamily. Adenosine and AMP deaminases family. Adenine deaminase type 2 subfamily. The cofactor is Zn(2+).

The enzyme catalyses adenine + H2O + H(+) = hypoxanthine + NH4(+). In terms of biological role, catalyzes the hydrolytic deamination of adenine to hypoxanthine. Plays an important role in the purine salvage pathway and in nitrogen catabolism. This is Adenine deaminase from Cupriavidus metallidurans (strain ATCC 43123 / DSM 2839 / NBRC 102507 / CH34) (Ralstonia metallidurans).